The chain runs to 347 residues: Eukaryotic translation initiation factor 3 subunit I (347 aa).

WD repeat units follow at residues 8-47 (GHER…RLGT), 50-89 (GHTG…CVAT), 149-190 (THEG…EYVD), 194-233 (LHEK…VLKK), and 291-330 (GHFG…FDFK). S302 is modified (phosphoserine).

It belongs to the eIF-3 subunit I family. In terms of assembly, component of the eukaryotic translation initiation factor 3 (eIF-3) complex.

It localises to the cytoplasm. Functionally, component of the eukaryotic translation initiation factor 3 (eIF-3) complex, which is involved in protein synthesis of a specialized repertoire of mRNAs and, together with other initiation factors, stimulates binding of mRNA and methionyl-tRNAi to the 40S ribosome. The eIF-3 complex specifically targets and initiates translation of a subset of mRNAs involved in cell proliferation. In Saccharomyces cerevisiae (strain YJM789) (Baker's yeast), this protein is Eukaryotic translation initiation factor 3 subunit I.